We begin with the raw amino-acid sequence, 460 residues long: Phosphomethylpyrimidine synthase (460 aa).

Residues N80, M109, Y139, H175, 195–197 (SRG), 236–239 (DSLR), and E275 contribute to the substrate site. H279 contacts Zn(2+). Y302 contacts substrate. H343 lines the Zn(2+) pocket. [4Fe-4S] cluster is bound by residues C423, C426, and C431.

This sequence belongs to the ThiC family. Requires [4Fe-4S] cluster as cofactor.

It catalyses the reaction 5-amino-1-(5-phospho-beta-D-ribosyl)imidazole + S-adenosyl-L-methionine = 4-amino-2-methyl-5-(phosphooxymethyl)pyrimidine + CO + 5'-deoxyadenosine + formate + L-methionine + 3 H(+). It functions in the pathway cofactor biosynthesis; thiamine diphosphate biosynthesis. Its function is as follows. Catalyzes the synthesis of the hydroxymethylpyrimidine phosphate (HMP-P) moiety of thiamine from aminoimidazole ribotide (AIR) in a radical S-adenosyl-L-methionine (SAM)-dependent reaction. The protein is Phosphomethylpyrimidine synthase of Rippkaea orientalis (strain PCC 8801 / RF-1) (Cyanothece sp. (strain PCC 8801)).